The chain runs to 98 residues: Aspartyl/glutamyl-tRNA(Asn/Gln) amidotransferase subunit C (98 aa).

This sequence belongs to the GatC family. In terms of assembly, heterotrimer of A, B and C subunits.

It catalyses the reaction L-glutamyl-tRNA(Gln) + L-glutamine + ATP + H2O = L-glutaminyl-tRNA(Gln) + L-glutamate + ADP + phosphate + H(+). It carries out the reaction L-aspartyl-tRNA(Asn) + L-glutamine + ATP + H2O = L-asparaginyl-tRNA(Asn) + L-glutamate + ADP + phosphate + 2 H(+). Its function is as follows. Allows the formation of correctly charged Asn-tRNA(Asn) or Gln-tRNA(Gln) through the transamidation of misacylated Asp-tRNA(Asn) or Glu-tRNA(Gln) in organisms which lack either or both of asparaginyl-tRNA or glutaminyl-tRNA synthetases. The reaction takes place in the presence of glutamine and ATP through an activated phospho-Asp-tRNA(Asn) or phospho-Glu-tRNA(Gln). The chain is Aspartyl/glutamyl-tRNA(Asn/Gln) amidotransferase subunit C from Micrococcus luteus (strain ATCC 4698 / DSM 20030 / JCM 1464 / CCM 169 / CCUG 5858 / IAM 1056 / NBRC 3333 / NCIMB 9278 / NCTC 2665 / VKM Ac-2230) (Micrococcus lysodeikticus).